The chain runs to 321 residues: Biotin synthase (321 aa).

Positions 37 to 264 (RDMELCTLSS…TSVIRLSAGR (228 aa)) constitute a Radical SAM core domain. The [4Fe-4S] cluster site is built by cysteine 52, cysteine 56, and cysteine 59. [2Fe-2S] cluster is bound by residues cysteine 96, cysteine 127, cysteine 187, and arginine 259.

This sequence belongs to the radical SAM superfamily. Biotin synthase family. Homodimer. [4Fe-4S] cluster is required as a cofactor. Requires [2Fe-2S] cluster as cofactor.

It catalyses the reaction (4R,5S)-dethiobiotin + (sulfur carrier)-SH + 2 reduced [2Fe-2S]-[ferredoxin] + 2 S-adenosyl-L-methionine = (sulfur carrier)-H + biotin + 2 5'-deoxyadenosine + 2 L-methionine + 2 oxidized [2Fe-2S]-[ferredoxin]. It functions in the pathway cofactor biosynthesis; biotin biosynthesis; biotin from 7,8-diaminononanoate: step 2/2. Functionally, catalyzes the conversion of dethiobiotin (DTB) to biotin by the insertion of a sulfur atom into dethiobiotin via a radical-based mechanism. In Coxiella burnetii (strain CbuK_Q154) (Coxiella burnetii (strain Q154)), this protein is Biotin synthase.